We begin with the raw amino-acid sequence, 356 residues long: UDP-N-acetylglucosamine--N-acetylmuramyl-(pentapeptide) pyrophosphoryl-undecaprenol N-acetylglucosamine transferase (356 aa).

Residues R166, S196, and Q290 each contribute to the UDP-N-acetyl-alpha-D-glucosamine site.

This sequence belongs to the glycosyltransferase 28 family. MurG subfamily.

It localises to the cell membrane. The enzyme catalyses Mur2Ac(oyl-L-Ala-gamma-D-Glu-L-Lys-D-Ala-D-Ala)-di-trans,octa-cis-undecaprenyl diphosphate + UDP-N-acetyl-alpha-D-glucosamine = beta-D-GlcNAc-(1-&gt;4)-Mur2Ac(oyl-L-Ala-gamma-D-Glu-L-Lys-D-Ala-D-Ala)-di-trans,octa-cis-undecaprenyl diphosphate + UDP + H(+). Its pathway is cell wall biogenesis; peptidoglycan biosynthesis. Cell wall formation. Catalyzes the transfer of a GlcNAc subunit on undecaprenyl-pyrophosphoryl-MurNAc-pentapeptide (lipid intermediate I) to form undecaprenyl-pyrophosphoryl-MurNAc-(pentapeptide)GlcNAc (lipid intermediate II). This Staphylococcus aureus (strain MRSA252) protein is UDP-N-acetylglucosamine--N-acetylmuramyl-(pentapeptide) pyrophosphoryl-undecaprenol N-acetylglucosamine transferase.